The sequence spans 209 residues: Large ribosomal subunit protein uL3 (209 aa).

The segment at 141 to 163 is disordered; that stretch reads RAVGSMGASSDPSRTFKNKRMPG.

It belongs to the universal ribosomal protein uL3 family. Part of the 50S ribosomal subunit. Forms a cluster with proteins L14 and L19.

Its function is as follows. One of the primary rRNA binding proteins, it binds directly near the 3'-end of the 23S rRNA, where it nucleates assembly of the 50S subunit. This is Large ribosomal subunit protein uL3 from Clostridium botulinum (strain Langeland / NCTC 10281 / Type F).